Consider the following 299-residue polypeptide: Putative syntaxin-2 (299 aa).

Residues 1–270 (MRDRLNEFQS…SAMRKKICVA (270 aa)) are Cytoplasmic-facing. Residues 112-146 (EKRMRQNQLELLKDNLNKLINLFNETHQDYKSRVS) are a coiled coil. The t-SNARE coiled-coil homology domain maps to 193-255 (YEDVKKRHGE…KQGSANVKTA (63 aa)). Residues 271–291 (AILITILLILIIVAIILAVVL) form a helical; Anchor for type IV membrane protein membrane-spanning segment. Topologically, residues 292 to 299 (SRGNNNNK) are extracellular.

It belongs to the syntaxin family.

The protein resides in the membrane. In terms of biological role, potentially involved in docking of synaptic vesicles at presynaptic active zones. The chain is Putative syntaxin-2 (syx-2) from Caenorhabditis elegans.